Here is a 908-residue protein sequence, read N- to C-terminus: MFGKLLTKVFGSRNDRTLKGLQKVVNKINALEADYEKLTDEQLKAKTAEFRERLAAGASLDSIMAEAFATVREASKRVFEMRHFDVQLLGGMVLDSNRIAEMRTGEGKTLTATLPAYLNALTGKGVHVITVNDYLARRDAENNRPLFEFLGLTVGINVAGLGQQDKKDAYNADITYGTNNEFGFDYLRDNMAFSPQERVQRPLHYALIDEVDSILIDEARTPLIISGAAEDSSELYIKINTLIPNLIRQDKEDSEEYVGEGDYTIDEKAKQVHFTERGQEKVENLLIERGMLAEGDSLYSAANISLLHHVNAALRAHTLFERDVDYIVQDGEVIIVDEHTGRTMPGRRWSEGLHQAVEAKEGVRIQNENQTLASITFQNYFRLYEKLAGMTGTADTEAFEFQHIYGLDTVVVPTNRPMVRKDMADLVYLTANEKYQAIIKDIKDCRERGQPVLVGTVSIEQSELLARLMVKEKIPHQVLNAKFHEKEAEIVAQAGRTGAVTIATNMAGRGTDIVLGGNWNMEIDALENPTPEQKAKIKADWQLRHDAVVAAGGLHILGTERHESRRIDNQLRGRAGRQGDAGSSRFYLSMEDSLMRIFASDRVSGMMKKLGMEEGEAIEHPWVSRAIENAQRKVEARNFDIRKQLLEFDDVANDQRQVVYAQRNELMDAESIADTIQNIQDDVISAVIDQYIPPQSVEELWDVPGLEQRLHQEFMLKLPIQEWLDKEDDLHEESLRERIITSWSDAYKAKEEMVGASVLRQFEKAVMLQTLDGLWKEHLAAMDHLRQGIHLRGYAQKNPKQEYKRESFELFQQLLNTLKHDVISVLSKVQVQAQSDVEEMEARRREEDAKIQRDYQHAAAEALVGGSDEDDAIAAHTPMIRDGDKVGRNDPCPCGSGRKYKQCHGKLS.

ATP contacts are provided by residues glutamine 87, 105–109 (GEGKT), and aspartate 512. Positions 866 to 908 (GSDEDDAIAAHTPMIRDGDKVGRNDPCPCGSGRKYKQCHGKLS) are disordered. Over residues 879–888 (MIRDGDKVGR) the composition is skewed to basic and acidic residues. Zn(2+) contacts are provided by cysteine 892, cysteine 894, cysteine 903, and histidine 904. A compositionally biased stretch (basic residues) spans 898–908 (RKYKQCHGKLS).

This sequence belongs to the SecA family. In terms of assembly, monomer and homodimer. Part of the essential Sec protein translocation apparatus which comprises SecA, SecYEG and auxiliary proteins SecDF-YajC and YidC. Requires Zn(2+) as cofactor.

The protein localises to the cell inner membrane. It localises to the cytoplasm. The catalysed reaction is ATP + H2O + cellular proteinSide 1 = ADP + phosphate + cellular proteinSide 2.. Functionally, part of the Sec protein translocase complex. Interacts with the SecYEG preprotein conducting channel. Has a central role in coupling the hydrolysis of ATP to the transfer of proteins into and across the cell membrane, serving both as a receptor for the preprotein-SecB complex and as an ATP-driven molecular motor driving the stepwise translocation of polypeptide chains across the membrane. This Shewanella oneidensis (strain ATCC 700550 / JCM 31522 / CIP 106686 / LMG 19005 / NCIMB 14063 / MR-1) protein is Protein translocase subunit SecA.